We begin with the raw amino-acid sequence, 217 residues long: Probable transaldolase (217 aa).

Lys-83 functions as the Schiff-base intermediate with substrate in the catalytic mechanism.

It belongs to the transaldolase family. Type 3B subfamily.

It is found in the cytoplasm. The enzyme catalyses D-sedoheptulose 7-phosphate + D-glyceraldehyde 3-phosphate = D-erythrose 4-phosphate + beta-D-fructose 6-phosphate. The protein operates within carbohydrate degradation; pentose phosphate pathway; D-glyceraldehyde 3-phosphate and beta-D-fructose 6-phosphate from D-ribose 5-phosphate and D-xylulose 5-phosphate (non-oxidative stage): step 2/3. Functionally, transaldolase is important for the balance of metabolites in the pentose-phosphate pathway. This chain is Probable transaldolase, found in Coprothermobacter proteolyticus (strain ATCC 35245 / DSM 5265 / OCM 4 / BT).